Reading from the N-terminus, the 431-residue chain is Adenylosuccinate synthetase (431 aa).

GTP contacts are provided by residues 12–18 (GDEGKGK) and 40–42 (GHT). The Proton acceptor role is filled by D13. D13 and G40 together coordinate Mg(2+). Residues 13–16 (DEGK), 38–41 (NAGH), T130, R144, Q224, T239, and R303 contribute to the IMP site. H41 functions as the Proton donor in the catalytic mechanism. 299–305 (STTGRPR) provides a ligand contact to substrate. GTP-binding positions include R305, 331 to 333 (KAD), and 413 to 415 (SIG).

Belongs to the adenylosuccinate synthetase family. In terms of assembly, homodimer. Mg(2+) serves as cofactor.

Its subcellular location is the cytoplasm. The catalysed reaction is IMP + L-aspartate + GTP = N(6)-(1,2-dicarboxyethyl)-AMP + GDP + phosphate + 2 H(+). The protein operates within purine metabolism; AMP biosynthesis via de novo pathway; AMP from IMP: step 1/2. Functionally, plays an important role in the de novo pathway of purine nucleotide biosynthesis. Catalyzes the first committed step in the biosynthesis of AMP from IMP. The protein is Adenylosuccinate synthetase of Cytophaga hutchinsonii (strain ATCC 33406 / DSM 1761 / CIP 103989 / NBRC 15051 / NCIMB 9469 / D465).